The following is a 5100-amino-acid chain: Hemicentin-2 (5100 aa).

A signal peptide spans 1 to 19 (MTPGAQLLPLLVAISTAVA). One can recognise a VWFA domain in the interval 37-211 (DATLAFVFDV…QVSEVLKWVE (175 aa)). Residues Asn330, Asn347, Asn380, Asn479, Asn526, Asn548, and Asn675 are each glycosylated (N-linked (GlcNAc...) asparagine). 43 Ig-like C2-type domains span residues 426-515 (PGVP…IVIT), 517-601 (PPPQ…RATT), 609-692 (PQVS…ETVT), 699-782 (PSVS…IQLV), 787-877 (PRLT…LVVT), 882-968 (PQIA…VELV), 973-1058 (PRIH…MWLS), 1063-1156 (PMIK…YVLR), 1161-1239 (PQVQ…WKLE), 1246-1335 (PHWG…AKLV), 1340-1437 (PSIR…FNLA), 1442-1531 (PSLL…FQLS), 1536-1624 (PTIW…TSLE), 1629-1717 (PTIE…YSVE), 1722-1810 (PQLL…VEVS), 1825-1913 (SAHH…KDVT), 1920-2008 (PNIE…LRVN), 2011-2100 (PRIT…VILQ), 2105-2189 (PSIL…KHFN), 2196-2285 (PAFP…QSLE), 2290-2379 (PQVT…FALS), 2384-2473 (PHLT…FSVE), 2478-2566 (PSIE…TQLS), 2571-2662 (PTIL…YHVE), 2667-2758 (PSIS…QDFN), 2781-2871 (PHEE…YELL), 2875-2964 (PPVI…KLFT), 2971-3058 (PQIS…VQLN), 3063-3153 (PSFK…FVLA), 3157-3245 (PPTF…FVVS), 3250-3340 (PQIQ…HTVN), 3345-3432 (PTIK…RNFT), 3438-3523 (PPIL…FQLT), 3528-3609 (PHIE…FRVR), 3614-3702 (PNVV…FRVE), 3707-3793 (PTIQ…LDLR), 3798-3886 (PAIA…YQVT), 3891-3977 (PTIA…MVLT), 3982-4067 (PVVK…TRLV), 4071-4158 (PPVI…VHLT), 4163-4244 (PVLT…QAVS), 4252-4336 (PVLQ…KVVT), and 4343-4428 (PVFQ…ALLA). Cys449 and Cys497 form a disulfide bridge. 6 cysteine pairs are disulfide-bonded: Cys539–Cys588, Cys630–Cys678, Cys720–Cys766, Cys808–Cys859, Cys903–Cys952, and Cys994–Cys1042. Arg909, Arg914, and Arg915 each carry omega-N-methylarginine. N-linked (GlcNAc...) asparagine glycosylation is found at Asn1024 and Asn1068. 2 disulfides stabilise this stretch: Cys1091–Cys1140 and Cys1182–Cys1225. An N-linked (GlcNAc...) asparagine glycan is attached at Asn1264. The interval 1265-1293 (ASLPCPAQGTPKPRITWRRGPSSEPLNGR) is disordered. Cys1269 and Cys1319 form a disulfide bridge. N-linked (GlcNAc...) asparagine glycosylation occurs at Asn1350. 2 disulfide bridges follow: Cys1363-Cys1421 and Cys1465-Cys1515. N-linked (GlcNAc...) asparagine glycosylation occurs at Asn1542. 4 cysteine pairs are disulfide-bonded: Cys1559/Cys1608, Cys1653/Cys1701, Cys1745/Cys1794, and Cys1846/Cys1899. N-linked (GlcNAc...) asparagine glycosylation is found at Asn1676 and Asn1787. N-linked (GlcNAc...) asparagine glycosylation occurs at Asn1934. Cystine bridges form between Cys1941/Cys1990 and Cys2033/Cys2084. Asn2034, Asn2113, and Asn2119 each carry an N-linked (GlcNAc...) asparagine glycan. 2 disulfides stabilise this stretch: Cys2126-Cys2175 and Cys2218-Cys2269. N-linked (GlcNAc...) asparagine glycans are attached at residues Asn2309, Asn2315, Asn2345, and Asn2395. Cys2314 and Cys2363 form a disulfide bridge. A disulfide bridge links Cys2408 with Cys2457. N-linked (GlcNAc...) asparagine glycosylation is found at Asn2469, Asn2502, Asn2541, Asn2606, and Asn2688. Cystine bridges form between Cys2501-Cys2550 and Cys2597-Cys2646. 2 disulfide bridges follow: Cys2695–Cys2744 and Cys2806–Cys2855. Asn2892 carries an N-linked (GlcNAc...) asparagine glycan. Cysteines 2901 and 2950 form a disulfide. Asn2986 carries an N-linked (GlcNAc...) asparagine glycan. 5 disulfides stabilise this stretch: Cys2993-Cys3042, Cys3088-Cys3137, Cys3180-Cys3229, Cys3273-Cys3324, and Cys3369-Cys3418. Asn3430 carries an N-linked (GlcNAc...) asparagine glycan. Intrachain disulfides connect Cys3462–Cys3507, Cys3551–Cys3593, and Cys3637–Cys3686. N-linked (GlcNAc...) asparagine glycosylation is found at Asn3560 and Asn3575. 2 N-linked (GlcNAc...) asparagine glycosylation sites follow: Asn3717 and Asn3721. A disulfide bond links Cys3728 and Cys3777. Asn3806 carries N-linked (GlcNAc...) asparagine glycosylation. Intrachain disulfides connect Cys3819–Cys3870, Cys3912–Cys3961, Cys4003–Cys4051, Cys4093–Cys4142, Cys4184–Cys4231, Cys4274–Cys4322, and Cys4364–Cys4412. Asn4304 carries N-linked (GlcNAc...) asparagine glycosylation. One can recognise a Nidogen G2 beta-barrel domain in the interval 4432 to 4654 (EPRGSRGSMT…QTEENEVGCP (223 aa)). Residues Asn4455 and Asn4601 are each glycosylated (N-linked (GlcNAc...) asparagine). The EGF-like 1; calcium-binding domain occupies 4668–4708 (DKDECSGGPSPCSHTCRNAPGHFSCSCPTGFSLAWDHRNCR). Disulfide bonds link Cys4672–Cys4683, Cys4679–Cys4692, Cys4694–Cys4707, Cys4713–Cys4726, Cys4720–Cys4735, Cys4739–Cys4752, Cys4758–Cys4771, Cys4765–Cys4780, Cys4801–Cys4812, Cys4808–Cys4821, and Cys4823–Cys4836. Positions 4709-4753 (DVDECAGNTHLCQEEQRCVNLLGSYNCLASCRPGFRVTADGSNCE) constitute an EGF-like 2; calcium-binding domain. The region spanning 4754–4789 (DVDECLEQLDECHYNQLCENTPGGHHCGCPRGYRQQ) is the EGF-like 3; calcium-binding domain. Positions 4797-4837 (DINECLQLPTPCVYQCQNLQGSYRCLCPPGQTLLRDGRTCI) constitute an EGF-like 4; calcium-binding domain. An N-linked (GlcNAc...) asparagine glycan is attached at Asn4845. Residues 4904–4943 (DLDECRVRSLCQHACQNTEGSYYCLCPSGYRLLPSGKNCQ) form the EGF-like 5; calcium-binding domain. 3 disulfide bridges follow: Cys4908/Cys4918, Cys4914/Cys4927, and Cys4929/Cys4942. Asn5035 is a glycosylation site (N-linked (GlcNAc...) asparagine).

In terms of processing, reported to be phosphorylated; however as this position is extracellular, the in vivo relevance is unsure. In neonatal skin, localized in the pericellular space of basal epidermal keratinocytes (at protein level). In adult skin, restricted to basal keratinocytes of hair follicles and the interfollicular epidermis. Absent from the myotendinous junction but present in skeletal muscle (at protein level). Expressed in the pericellular extracellular matrix of epithelial cells in a number of tissues including embryonic trophectoderm and adult skin and tongue. Also present in the extracellular matrix of some, but not all, blood vessels. Expressed primarily in epithelial cells in the embryonic epidermis, lung, intestine, skeletal hindlimb muscle, tongue and the muscular layers of the esophagus.

The protein localises to the secreted. It is found in the extracellular space. Its subcellular location is the extracellular matrix. The protein resides in the cleavage furrow. This Mus musculus (Mouse) protein is Hemicentin-2 (Hmcn2).